Consider the following 250-residue polypeptide: Exosome complex component Rrp41 (250 aa).

Belongs to the RNase PH family. Rrp41 subfamily. Component of the archaeal exosome complex. Forms a hexameric ring-like arrangement composed of 3 Rrp41-Rrp42 heterodimers. The hexameric ring associates with a trimer of Rrp4 and/or Csl4 subunits.

Its subcellular location is the cytoplasm. Its function is as follows. Catalytic component of the exosome, which is a complex involved in RNA degradation. Has 3'-&gt;5' exoribonuclease activity. Can also synthesize heteromeric RNA-tails. This Pyrococcus furiosus (strain ATCC 43587 / DSM 3638 / JCM 8422 / Vc1) protein is Exosome complex component Rrp41.